The sequence spans 353 residues: tRNA-specific 2-thiouridylase MnmA 2 (353 aa).

Position 6 to 13 (6 to 13 (LLSGGVDS)) interacts with ATP. Positions 92-94 (NPD) are interaction with target base in tRNA. The active-site Nucleophile is the Cys-97. A disulfide bridge connects residues Cys-97 and Cys-192. Residue Gly-120 coordinates ATP. The interaction with tRNA stretch occupies residues 142-144 (KDQ). The active-site Cysteine persulfide intermediate is the Cys-192.

The protein belongs to the MnmA/TRMU family.

The protein resides in the cytoplasm. It carries out the reaction S-sulfanyl-L-cysteinyl-[protein] + uridine(34) in tRNA + AH2 + ATP = 2-thiouridine(34) in tRNA + L-cysteinyl-[protein] + A + AMP + diphosphate + H(+). Functionally, catalyzes the 2-thiolation of uridine at the wobble position (U34) of tRNA, leading to the formation of s(2)U34. The chain is tRNA-specific 2-thiouridylase MnmA 2 from Bacteroides fragilis (strain YCH46).